We begin with the raw amino-acid sequence, 1105 residues long: Serine/threonine-protein kinase Warts (1105 aa).

Residues 33-54 (VQNNHRNNQNYTPLRYTATNGR) are compositionally biased toward polar residues. 5 disordered regions span residues 33 to 81 (VQNN…APDV), 145 to 253 (CSPA…TQNG), 273 to 362 (GGGS…YQAR), 383 to 462 (QTAV…EPPS), and 514 to 643 (AQRE…RKEF). Positions 69 to 81 (MEPPPSASPAPDV) are enriched in pro residues. The segment covering 242 to 253 (QRGNSPVITQNG) has biased composition (polar residues). Over residues 307-320 (SMQSRQSPTQSQQS) the composition is skewed to low complexity. The segment covering 325 to 343 (SPSSGIYSATSAGSPSPIT) has biased composition (polar residues). Low complexity-rich tracts occupy residues 387–400 (APQS…SNSP) and 415–437 (AAVV…QHQQ). Residues 515–533 (QRERDQRERDQRERERDQQ) are compositionally biased toward basic and acidic residues. 2 stretches are compositionally biased toward low complexity: residues 551–576 (QSNN…SNSN) and 589–616 (NNNS…SSTS). Basic and acidic residues predominate over residues 627 to 643 (PERKKISKEKEEERKEF). In terms of domain architecture, Protein kinase spans 719–1020 (FVKLKPIGVG…VDEVKSHDFF (302 aa)). ATP is bound by residues 725–733 (IGVGAFGEV) and lysine 749. Aspartate 843 serves as the catalytic Proton acceptor. Disordered stretches follow at residues 881–900 (GNHS…ENGP) and 1038–1070 (EIKH…DDVD). The AGC-kinase C-terminal domain occupies 1021-1091 (KGIDFADMRK…FTFRRFFDDK (71 aa)).

This sequence belongs to the protein kinase superfamily. AGC Ser/Thr protein kinase family. As to quaternary structure, interacts with yki. Interacts with jub. The cofactor is Mg(2+).

The protein localises to the cytoplasm. It localises to the cytosol. It is found in the cytoskeleton. Its subcellular location is the microtubule organizing center. The protein resides in the centrosome. The enzyme catalyses L-seryl-[protein] + ATP = O-phospho-L-seryl-[protein] + ADP + H(+). The catalysed reaction is L-threonyl-[protein] + ATP = O-phospho-L-threonyl-[protein] + ADP + H(+). Its function is as follows. Negative regulator of Yorkie (Yki) in the Hippo/SWH (Sav/Wts/Hpo) signaling pathway that plays a pivotal role in organ size control and tumor suppression by restricting proliferation and promoting apoptosis. The core of this pathway is composed of a kinase cascade wherein Hippo (Hpo), in complex with its regulatory protein Salvador (Sav), phosphorylates and activates Warts (Wts) in complex with its regulatory protein Mats, which in turn phosphorylates and inactivates the Yorkie (Yki) oncoprotein. The Hippo/SWH signaling pathway inhibits the activity of the transcriptional complex formed by Scalloped (sd) and Yki and the target genes of this pathway include cyclin-E (cycE), diap1 and bantam. Inhibits nuclear localization of Yki. Regulates salivary gland degradation in a PI3K-dependent manner and Yki- and Sd-independent, mechanism. The sequence is that of Serine/threonine-protein kinase Warts (wts) from Drosophila melanogaster (Fruit fly).